The chain runs to 345 residues: uncharacterized protein (345 aa).

A domain (TBDR plug) is located at residue M1. The TBDR beta-barrel domain maps to 1 to 345 (MDLGPIYNTR…EVILNTKIEF (345 aa)). The TonB C-terminal box motif lies at 328 to 345 (PVALGYAREVILNTKIEF).

This sequence belongs to the TonB-dependent receptor family.

Its subcellular location is the cell outer membrane. This is an uncharacterized protein from Haemophilus influenzae (strain ATCC 51907 / DSM 11121 / KW20 / Rd).